The chain runs to 124 residues: Large ribosomal subunit protein eL31 (124 aa).

The protein belongs to the eukaryotic ribosomal protein eL31 family. Component of the large ribosomal subunit.

The protein localises to the cytoplasm. In terms of biological role, component of the large ribosomal subunit. The ribosome is a large ribonucleoprotein complex responsible for the synthesis of proteins in the cell. In Paralichthys olivaceus (Bastard halibut), this protein is Large ribosomal subunit protein eL31 (rpl31).